Here is an 896-residue protein sequence, read N- to C-terminus: MVVPEFRSPQCRALCTKLLLTLWVFSFVGEACKKVTFHVPSTLEADKIIGRVSLKECLSSADGIMPSDPDFRVLDDGSVYPTRAVVLSDEKRSFTIQLSDSKMQTQKEIPVILEHKKKVLKKRHTKETVLRRSKRRWAPIPCSMQENSLGPFPLFLQQVQSDAAQNYTVFYSISGRGADQEPLNWFFIERDTGNLYCTRPVDREEYDVFDLIAYASTADGYSADLPLPLPIKIEDENDNYPLFTEAIYAFEVPEGSRLGTVVGTVCATDKDEPDTMHTRLKYSILEQTPPSPGLFSVHPDTGVITTVSHYMDREVVDKYKLIMKVQDMNGQFFGLISTSTCIITVQDSNDNAPTFRQNTYETAVEENTYNVEILRIPVDDKDMINTANWKANFTILKGNENGWFKITTDPVTNEGVLCVVKPLDYEENRQVTLEIGVNNEAPFIKDVANRIPTMNRAMVTVHVKDQNEGPECKPPEQYVRIKENSAVGSKINGYKAYDPETKNSNGLRYKKLQDPKDWVSIEEVSGLLTISKTLDREIMAPRNDMYNITVMAIDQEGKSCTGTLAVNIEDVNDNAPEIIQDYIVICKPKMGYTDISAVDPDEPIHGPPFQFNLANTSPEVNRIWTLNQVNDTAARLSYQKTADVQIYNVPVTVKDRAGQSATKILRVNLCDCTHPSQCPLRSRSAGITLGKWAILAILLGIALLFSVLLTLVCGVVTARKGKHFPEDLAQQNLIISNTEAPGDDRVCSANGFTTHTANNSSQGFCGTMGSGMRNGGQETIEMMKGHQTLDSCRVAGHHHTLDSGRGGHMDTDNCRYTYSEWHSFTQPRLGEKLHVCNQNEDHIPSQDYVLTYNYEGRGSPAGSVGCCSEKQEEEGLDFLNNLEPKFLTLAETCTKR.

The first 31 residues, 1-31 (MVVPEFRSPQCRALCTKLLLTLWVFSFVGEA), serve as a signal peptide directing secretion. The propeptide occupies 32–135 (CKKVTFHVPS…KETVLRRSKR (104 aa)). Cadherin domains follow at residues 136 to 243 (RWAP…YPLF), 244 to 355 (TEAI…APTF), 356 to 472 (RQNT…GPEC), 473 to 580 (KPPE…EIIQ), and 581 to 691 (DYIV…TLGK). At 136-695 (RWAPIPCSMQ…GITLGKWAIL (560 aa)) the chain is on the extracellular side. A glycan (N-linked (GlcNAc...) asparagine) is linked at Asn-166. 2 N-linked (GlcNAc...) asparagine glycosylation sites follow: Asn-392 and Asn-547. A glycan (N-linked (GlcNAc...) (high mannose) asparagine) is linked at Asn-630. Residues 696 to 716 (AILLGIALLFSVLLTLVCGVV) form a helical membrane-spanning segment. Topologically, residues 717 to 896 (TARKGKHFPE…LTLAETCTKR (180 aa)) are cytoplasmic.

In terms of assembly, may form homodimers. Interacts with DSG1; there is evidence to suggest that the interaction promotes cell-cell adhesion of keratinocytes. As to expression, expressed in the basal layers of epidermal stratified epithelia from birth (at protein level).

The protein resides in the cell membrane. The protein localises to the cell junction. It is found in the desmosome. It localises to the cytoplasm. Its function is as follows. A component of desmosome cell-cell junctions which are required for positive regulation of cellular adhesion. Required for cell-cell adhesion in the epidermis, as a result required for the maintenance of the dermal cohesion and the dermal barrier function. Required for cell-cell adhesion of epithelial cell layers surrounding the telogen hair club, as a result plays an important role in telogen hair shaft anchorage. Essential for successful completion of embryo compaction and development beyond the 8-cell stage. In Mus musculus (Mouse), this protein is Desmocollin-3 (Dsc3).